The following is a 449-amino-acid chain: Tryptophan--tRNA ligase (449 aa).

Residues Thr-10–Thr-12 and Gly-18–Asn-19 contribute to the ATP site. Residues Thr-11–Asn-19 carry the 'HIGH' region motif. Asp-143 is a binding site for L-tryptophan. ATP is bound by residues Gly-155 to Asp-157, Leu-197, and Lys-204 to Ser-208. The 'KMSKS' region motif lies at Lys-204–Ser-208.

This sequence belongs to the class-I aminoacyl-tRNA synthetase family. In terms of assembly, homodimer.

The protein localises to the cytoplasm. The catalysed reaction is tRNA(Trp) + L-tryptophan + ATP = L-tryptophyl-tRNA(Trp) + AMP + diphosphate + H(+). In terms of biological role, catalyzes the attachment of tryptophan to tRNA(Trp). This chain is Tryptophan--tRNA ligase, found in Pseudomonas putida (strain ATCC 47054 / DSM 6125 / CFBP 8728 / NCIMB 11950 / KT2440).